The primary structure comprises 789 residues: Cadherin-10 (789 aa).

The signal sequence occupies residues 1–22 (MTIQQVLLLLLLWMWLLHPCRT). Residues 23–54 (EMLFRRTPDLRPKGFVGRTSGSDGKALHRQKR) constitute a propeptide that is removed on maturation. Cadherin domains follow at residues 55-160 (GWMW…EPTF), 161-269 (PEEI…PPRF), 270-384 (PQST…PPVF), 385-487 (SRSS…DNAP), and 488-606 (QFAV…LLLP). Residues 55 to 606 (GWMWNQFFLL…SCNAEALLLP (552 aa)) lie on the Extracellular side of the membrane. An N-linked (GlcNAc...) asparagine glycan is attached at asparagine 256. N-linked (GlcNAc...) asparagine glycans are attached at residues asparagine 438, asparagine 456, and asparagine 534. A helical transmembrane segment spans residues 607–634 (AGLSTGALIAILLCIIILLVIVVLFAAL). Topologically, residues 635-789 (KRQRKKEPLI…GGGESDKDAS (155 aa)) are cytoplasmic.

It localises to the cell membrane. Functionally, cadherins are calcium-dependent cell adhesion proteins. They preferentially interact with themselves in a homophilic manner in connecting cells; cadherins may thus contribute to the sorting of heterogeneous cell types. In Gallus gallus (Chicken), this protein is Cadherin-10 (CDH10).